Consider the following 572-residue polypeptide: MTEPRHESGSAAPQRPATDPVQRQVNLLRDQKRNLDKQAAALASQNEKLVRLLNASRQEIVGLKKTLAAEAEPPATYAVVLQVNHGRRPVGEATGDGPVVTGPTLDVLAAGRRMRVAVSPLVSFGACEPGLGVLLNENYVVVALLEYERTGEVATVKEVVDHDRVLTVGRSDEERVLLLSGRLRRERPKPGDAVTVDHRTGFALEPVTRTDVEQLVLEEVPDVSYTDIGGLGPQIEAIRDAVELPHVHPEIFREHGLRPPKGILLYGPPGNGKTLIAKAVARSLAERSAAKAGRSRPEGYFLNIKGPELLDKYVGETERQIRSIFANAREQAARGVPVVVFFDEMDSLFRVRGSGLSSDVETTIVPQLLTEIDGVEQLDNVMVVGATNREDMIDPAVLRPGRLDVKIRIDRPDREGAREIFSLYLTPDLPLRDEDVARAGSRALAAEELVAAAVQRMYAREPETEFLTIGYRNGTSETLYFSDYASGAVIRNVVDRAKKQAIKTLLTTGRRGITAEHLVAAVDEEFHEQQDLPDTEDSEDWARLTGRRGDTIDSVHMASHRPQGEPGPGATP.

Positions 1–22 are disordered; the sequence is MTEPRHESGSAAPQRPATDPVQ. Residues 21–67 are a coiled coil; the sequence is VQRQVNLLRDQKRNLDKQAAALASQNEKLVRLLNASRQEIVGLKKTL. An ATP-binding site is contributed by 270 to 275; sequence GNGKTL. Positions 527 to 539 are enriched in acidic residues; sequence HEQQDLPDTEDSE. Residues 527–572 form a disordered region; the sequence is HEQQDLPDTEDSEDWARLTGRRGDTIDSVHMASHRPQGEPGPGATP.

It belongs to the AAA ATPase family. In terms of assembly, homohexamer. Assembles into a hexameric ring structure.

The protein is AAA ATPase forming ring-shaped complexes of Kocuria rhizophila (strain ATCC 9341 / DSM 348 / NBRC 103217 / DC2201).